Reading from the N-terminus, the 249-residue chain is Bacillaene synthase decarboxylase PksI (249 aa).

Residue His-230 is part of the active site.

This sequence belongs to the enoyl-CoA hydratase/isomerase family. In terms of assembly, homotrimer. Does not form a heterotrimeric complex with PksH.

The protein localises to the cytoplasm. It participates in antibiotic biosynthesis; bacillaene biosynthesis. Its function is as follows. Involved in some intermediate steps for the synthesis of the antibiotic polyketide bacillaene which is involved in secondary metabolism. Catalyzes the decarboxylation of the 3-methylglutaconyl group tethered to PksL to a 3-methylcrotonyl moiety. This chain is Bacillaene synthase decarboxylase PksI (pksI), found in Bacillus subtilis (strain 168).